The following is a 544-amino-acid chain: MEAWRCVRKGYGHCVVGRGRYPMFPHHSRSLGRDWTTPWENLQRCCWNRHISSCMRWPGHYSRAPYPYFSSRHFSLNWRPPCLFESRTQFQYCNWRPDNLSQTSLIHLSSYVMNAEGDEPSSKRRKHQGVIKRNWEYICSHDKEKTKILGDKNVDPKCEDSENKFDFSVMSYNILSQDLLEDNSHLYRHCRRPVLHWSFRFPNILKEIKHFDADVLCLQEVQEDHYGAEIRPSLESLGYHCEYKMRTGRKPDGCAICFKHSKFSLLSVNPVEFFRPDISLLDRDNVGLVLLLQPKIPYAACPAICVANTHLLYNPRRGDIKLTQLAMLLAEISSVAHQKDGSFCPIVMCGDFNSVPGSPLYSFIKEGKLNYEGLPIGKVSGQEQSSRGQRILSIPIWPPNLGISQNCVYEVQQVPKVEKTDSDLTQTQLKQTEVLVTAEKLSSNLQHHFSLSSVYSHYFPDTGIPEVTTCHSRSAITVDYIFYSAEKEDVAGHPGAEVALVGGLKLLARLSLLTEQDLWTVNGLPNENNSSDHLPLLAKFRLEL.

The protein belongs to the CCR4/nocturin family.

The sequence is that of Protein angel homolog 2 (ANGEL2) from Homo sapiens (Human).